The following is a 183-amino-acid chain: CKLF-like MARVEL transmembrane domain-containing protein 6 (183 aa).

Residue methionine 1 is modified to N-acetylmethionine. Residues 1–39 (MENGAVYSPTTEEDPGPARGPRSGLAAYFFMGRLPLLRR) are Cytoplasmic-facing. Serine 8 carries the phosphoserine modification. Residues 33-160 (RLPLLRRVLK…DFITMLYEKR (128 aa)) form the MARVEL domain. A helical transmembrane segment spans residues 40–60 (VLKGLQLLLSLLAFICEEVVS). The Extracellular segment spans residues 61-67 (QCTLCGG). The chain crosses the membrane as a helical span at residues 68–88 (LYFFEFVSCSAFLLSLLILIV). The Cytoplasmic portion of the chain corresponds to 89–106 (YCTPFYERVDTTKVKSSD). A helical transmembrane segment spans residues 107-127 (FYITLGTGCVFLLASIIFVST). The Extracellular portion of the chain corresponds to 128–134 (HDRTSAE). A helical transmembrane segment spans residues 135-155 (IAAIVFGFIASFMFLLDFITM). The Cytoplasmic portion of the chain corresponds to 156–183 (LYEKRQESQLRKPENTTRAEALTEPLNA). A Phosphothreonine modification is found at threonine 171.

It belongs to the chemokine-like factor family. Interacts with PD-L1/CD274 (via transmembrane domain); the interaction is direct. Interacts with CMTM4. Interacts with CD58, ARG1, ENO1 and TMPO. In terms of tissue distribution, expressed in the leukocytes, placenta and testis.

Its subcellular location is the cell membrane. The protein resides in the early endosome membrane. The protein localises to the recycling endosome membrane. Its function is as follows. Master regulator of recycling and plasma membrane expression of PD-L1/CD274, an immune inhibitory ligand critical for immune tolerance to self and antitumor immunity. Associates with both constitutive and IFNG-induced PD-L1/CD274 at recycling endosomes, where it protects PD-L1/CD274 from being targeted for lysosomal degradation, likely by preventing its STUB1-mediated ubiquitination. May stabilize PD-L1/CD274 expression on antigen presenting cells and potentiates inhibitory signaling by PDCD1/CD279, its receptor on T-cells, ultimately triggering T-cell anergy. In Homo sapiens (Human), this protein is CKLF-like MARVEL transmembrane domain-containing protein 6.